We begin with the raw amino-acid sequence, 360 residues long: E3 ubiquitin-protein ligase HAKAI homolog (360 aa).

The segment covering 1 to 11 (MLQIRLRRDSP) has biased composition (basic and acidic residues). Residues 1 to 24 (MLQIRLRRDSPTETGNGARPSPTE) form a disordered region. The segment at 72–107 (CVRCDFPIAIYGRLIPCDHAFCLECARSDSICYLCD) adopts an RING-type zinc-finger fold. Residues 123–148 (FICAAPHCLRSFLKKLDFEAHVHDLH) form a C2H2-type zinc finger. The segment at 156-360 (AEKEDGNQSD…QENRDGFGQE (205 aa)) is disordered. Polar residues-rich tracts occupy residues 163-179 (QSDVQSTMQQSSASEST), 186-214 (SQLQQSRELNRSASFAKSQSGFSQVQNYP), and 270-283 (YPTTESGSSQQFFN). Residues 293–304 (ESGGSEQSSLLG) show a composition bias toward low complexity.

Belongs to the Hakai family. As to quaternary structure, interacts with MTB and VIR. Associates with MTA, MTB, FIP37 and VIR to form the m6A writer complex which is essential for adenosine methylation at specific mRNA sequences.

Its subcellular location is the nucleus speckle. The protein resides in the nucleus. It is found in the nucleoplasm. It catalyses the reaction S-ubiquitinyl-[E2 ubiquitin-conjugating enzyme]-L-cysteine + [acceptor protein]-L-lysine = [E2 ubiquitin-conjugating enzyme]-L-cysteine + N(6)-ubiquitinyl-[acceptor protein]-L-lysine.. Probable E3 ubiquitin-protein ligase which is a subunit of the N6-methyltransferase complex, a multiprotein complex that mediates N6-methyladenosine (m6A) methylation at the 5'-[AG]GAC-3' consensus sites of some mRNAs. Associates with MTA, MTB, FIP37 and VIR to form the m6A writer complex which is essential for adenosine methylation at specific mRNA sequences. N6-methyladenosine (m6A) plays a role in mRNA stability, processing, translation efficiency and editing. The protein is E3 ubiquitin-protein ligase HAKAI homolog of Arabidopsis thaliana (Mouse-ear cress).